The sequence spans 241 residues: Microneme antigen (241 aa).

The first 34 residues, 1–34, serve as a signal peptide directing secretion; that stretch reads MRLPIRFPKYVLYGMASAVWSILFLHILVGDTMS. Positions 35–103 are excised as a propeptide; the sequence is AADALSWSGG…ATGRGPSFVH (69 aa). Positions 61-83 are enriched in basic and acidic residues; it reads HEMGKELEQQHGAEEQQMQRDTK. Positions 61–92 are disordered; it reads HEMGKELEQQHGAEEQQMQRDTKPAAFSNPPH. 2 PAN domains span residues 112 to 181 and 185 to 241; these read CFPH…PRSC and CTDN…FNKS. 6 disulfide bridges follow: Cys-112–Cys-181, Cys-137–Cys-159, Cys-141–Cys-147, Cys-185–Cys-189, Cys-210–Cys-230, and Cys-214–Cys-220. Position 121 (Ser-121) interacts with a carbohydrate. Lys-162, Tyr-169, and Asp-174 together coordinate a carbohydrate.

Belongs to the microneme antigen family. Homodimer or heterodimer of major microneme antigen and microneme antigen. In terms of processing, contains six disulfide bonds.

It localises to the cytoplasmic vesicle. The protein resides in the secretory vesicle. It is found in the microneme. Functionally, galactose-binding lectin. Plays a role in adhesion to the host cell. Has a potential role in invasion of host cells. This Sarcocystis muris protein is Microneme antigen.